The sequence spans 82 residues: Cytochrome b559 subunit alpha (82 aa).

A helical membrane pass occupies residues 22-36 (IIHAVTLPAIFIAGF). Heme is bound at residue histidine 24.

The protein belongs to the PsbE/PsbF family. In terms of assembly, heterodimer of an alpha subunit and a beta subunit. PSII is composed of 1 copy each of membrane proteins PsbA, PsbB, PsbC, PsbD, PsbE, PsbF, PsbH, PsbI, PsbJ, PsbK, PsbL, PsbM, PsbT, PsbX, PsbY, Psb30/Ycf12, peripheral proteins PsbO, CyanoQ (PsbQ), PsbU, PsbV and a large number of cofactors. It forms dimeric complexes. Heme b serves as cofactor.

It is found in the cellular thylakoid membrane. Functionally, this b-type cytochrome is tightly associated with the reaction center of photosystem II (PSII). PSII is a light-driven water:plastoquinone oxidoreductase that uses light energy to abstract electrons from H(2)O, generating O(2) and a proton gradient subsequently used for ATP formation. It consists of a core antenna complex that captures photons, and an electron transfer chain that converts photonic excitation into a charge separation. The sequence is that of Cytochrome b559 subunit alpha from Prochlorococcus marinus (strain SARG / CCMP1375 / SS120).